An 822-amino-acid chain; its full sequence is DNA gyrase subunit A (822 aa).

One can recognise a Topo IIA-type catalytic domain in the interval 32–497; that stretch reads LPDVRDGLKP…QVLSLEDEDL (466 aa). Tyr120 acts as the O-(5'-phospho-DNA)-tyrosine intermediate in catalysis. The GyrA-box signature appears at 524-530; the sequence is QKRGGRG.

This sequence belongs to the type II topoisomerase GyrA/ParC subunit family. As to quaternary structure, heterotetramer, composed of two GyrA and two GyrB chains. In the heterotetramer, GyrA contains the active site tyrosine that forms a transient covalent intermediate with DNA, while GyrB binds cofactors and catalyzes ATP hydrolysis.

The protein localises to the cytoplasm. It catalyses the reaction ATP-dependent breakage, passage and rejoining of double-stranded DNA.. In terms of biological role, a type II topoisomerase that negatively supercoils closed circular double-stranded (ds) DNA in an ATP-dependent manner to modulate DNA topology and maintain chromosomes in an underwound state. Negative supercoiling favors strand separation, and DNA replication, transcription, recombination and repair, all of which involve strand separation. Also able to catalyze the interconversion of other topological isomers of dsDNA rings, including catenanes and knotted rings. Type II topoisomerases break and join 2 DNA strands simultaneously in an ATP-dependent manner. The polypeptide is DNA gyrase subunit A (Streptococcus pneumoniae serotype 4 (strain ATCC BAA-334 / TIGR4)).